The sequence spans 401 residues: Enolase (401 aa).

Gln154 lines the (2R)-2-phosphoglycerate pocket. Glu197 functions as the Proton donor in the catalytic mechanism. Asp233, Glu274, and Asp301 together coordinate Mg(2+). Residues Lys326, Arg355, Ser356, and Lys377 each contribute to the (2R)-2-phosphoglycerate site. Lys326 functions as the Proton acceptor in the catalytic mechanism.

Belongs to the enolase family. The cofactor is Mg(2+).

Its subcellular location is the cytoplasm. The protein localises to the secreted. It is found in the cell surface. It catalyses the reaction (2R)-2-phosphoglycerate = phosphoenolpyruvate + H2O. Its pathway is carbohydrate degradation; glycolysis; pyruvate from D-glyceraldehyde 3-phosphate: step 4/5. Functionally, catalyzes the reversible conversion of 2-phosphoglycerate (2-PG) into phosphoenolpyruvate (PEP). It is essential for the degradation of carbohydrates via glycolysis. This Thermoplasma acidophilum (strain ATCC 25905 / DSM 1728 / JCM 9062 / NBRC 15155 / AMRC-C165) protein is Enolase.